The following is a 269-amino-acid chain: Formamidopyrimidine-DNA glycosylase (269 aa).

Proline 2 functions as the Schiff-base intermediate with DNA in the catalytic mechanism. Glutamate 3 (proton donor) is an active-site residue. Lysine 57 (proton donor; for beta-elimination activity) is an active-site residue. Residues histidine 90, arginine 109, and lysine 150 each contribute to the DNA site. An FPG-type zinc finger spans residues 235-269 (QVYGRGGEPCRVCGTPIQMAKHGQRSTFFCPACQH). Arginine 259 acts as the Proton donor; for delta-elimination activity in catalysis.

Belongs to the FPG family. In terms of assembly, monomer. Requires Zn(2+) as cofactor.

The enzyme catalyses Hydrolysis of DNA containing ring-opened 7-methylguanine residues, releasing 2,6-diamino-4-hydroxy-5-(N-methyl)formamidopyrimidine.. The catalysed reaction is 2'-deoxyribonucleotide-(2'-deoxyribose 5'-phosphate)-2'-deoxyribonucleotide-DNA = a 3'-end 2'-deoxyribonucleotide-(2,3-dehydro-2,3-deoxyribose 5'-phosphate)-DNA + a 5'-end 5'-phospho-2'-deoxyribonucleoside-DNA + H(+). Involved in base excision repair of DNA damaged by oxidation or by mutagenic agents. Acts as a DNA glycosylase that recognizes and removes damaged bases. Has a preference for oxidized purines, such as 7,8-dihydro-8-oxoguanine (8-oxoG). Has AP (apurinic/apyrimidinic) lyase activity and introduces nicks in the DNA strand. Cleaves the DNA backbone by beta-delta elimination to generate a single-strand break at the site of the removed base with both 3'- and 5'-phosphates. This is Formamidopyrimidine-DNA glycosylase from Sodalis glossinidius (strain morsitans).